A 131-amino-acid chain; its full sequence is Large ribosomal subunit protein bL17 (131 aa).

This sequence belongs to the bacterial ribosomal protein bL17 family. Part of the 50S ribosomal subunit. Contacts protein L32.

This chain is Large ribosomal subunit protein bL17, found in Bordetella parapertussis (strain 12822 / ATCC BAA-587 / NCTC 13253).